The chain runs to 154 residues: Large ribosomal subunit protein uL13 (154 aa).

The protein belongs to the universal ribosomal protein uL13 family. As to quaternary structure, part of the 50S ribosomal subunit.

In terms of biological role, this protein is one of the early assembly proteins of the 50S ribosomal subunit, although it is not seen to bind rRNA by itself. It is important during the early stages of 50S assembly. The protein is Large ribosomal subunit protein uL13 of Rhizobium etli (strain ATCC 51251 / DSM 11541 / JCM 21823 / NBRC 15573 / CFN 42).